The sequence spans 230 residues: Orotidine 5'-phosphate decarboxylase (230 aa).

Substrate contacts are provided by residues Asp10, Lys31, 58 to 67, Thr117, Arg179, Gln188, Gly208, and Arg209; that span reads DLKLHDIPNT. The Proton donor role is filled by Lys60.

The protein belongs to the OMP decarboxylase family. Type 1 subfamily. As to quaternary structure, homodimer.

It catalyses the reaction orotidine 5'-phosphate + H(+) = UMP + CO2. It functions in the pathway pyrimidine metabolism; UMP biosynthesis via de novo pathway; UMP from orotate: step 2/2. In terms of biological role, catalyzes the decarboxylation of orotidine 5'-monophosphate (OMP) to uridine 5'-monophosphate (UMP). The polypeptide is Orotidine 5'-phosphate decarboxylase (Staphylococcus epidermidis (strain ATCC 35984 / DSM 28319 / BCRC 17069 / CCUG 31568 / BM 3577 / RP62A)).